Consider the following 97-residue polypeptide: UPF0235 protein Ppha_2415 (97 aa).

Belongs to the UPF0235 family.

This chain is UPF0235 protein Ppha_2415, found in Pelodictyon phaeoclathratiforme (strain DSM 5477 / BU-1).